A 444-amino-acid chain; its full sequence is Signal recognition particle 54 kDa protein (444 aa).

GTP is bound by residues 104 to 111 (GLQGSGKT), 184 to 188 (DTAGR), and 242 to 245 (TKLD).

Belongs to the GTP-binding SRP family. SRP54 subfamily. Part of the signal recognition particle protein translocation system, which is composed of SRP and FtsY. Archaeal SRP consists of a 7S RNA molecule of 300 nucleotides and two protein subunits: SRP54 and SRP19.

The protein localises to the cytoplasm. It carries out the reaction GTP + H2O = GDP + phosphate + H(+). In terms of biological role, involved in targeting and insertion of nascent membrane proteins into the cytoplasmic membrane. Binds to the hydrophobic signal sequence of the ribosome-nascent chain (RNC) as it emerges from the ribosomes. The SRP-RNC complex is then targeted to the cytoplasmic membrane where it interacts with the SRP receptor FtsY. This chain is Signal recognition particle 54 kDa protein, found in Methanothrix thermoacetophila (strain DSM 6194 / JCM 14653 / NBRC 101360 / PT) (Methanosaeta thermophila).